A 216-amino-acid polypeptide reads, in one-letter code: MGPRNPSPDHLSESESEEEENISYLNESSGEEWDSSEEEDSMVPNLSPLESLAWQVKCLLKYSTTWKPLNPNSWLYHAKLLDPSTPVHILREIGLRLSHCSHCVPKLEPIPEWPPLASCGVPPFQKPLTSPSRLSRDHATLNGALQFATKQLSRTLSRATPIPEYLKQIPNSCVSGCCCGWLTKTVKETTRTEPINTTYSYTDFQKAVNKLLTASL.

The segment at 1–42 is disordered; that stretch reads MGPRNPSPDHLSESESEEEENISYLNESSGEEWDSSEEEDSM. Positions 29 to 41 are enriched in acidic residues; the sequence is SGEEWDSSEEEDS. N6-acetyllysine is present on lysine 61.

As to quaternary structure, interacts with DDB1 and CUL4A.

It localises to the nucleus. The protein operates within protein modification; protein ubiquitination. In terms of biological role, functions as a substrate recognition component for CUL4-DDB1 E3 ubiquitin-protein ligase complex, which mediates ubiquitination and proteasome-dependent degradation of nuclear proteins. The sequence is that of DDB1- and CUL4-associated factor 16 from Homo sapiens (Human).